The primary structure comprises 280 residues: ESX-1 secretion-associated protein EspJ (280 aa).

S70 carries the post-translational modification Phosphoserine. 2 stretches are compositionally biased toward low complexity: residues 167-181 and 246-280; these read QTISQTAQQAAQSAQ and PAQAMDTGAGARPAASPLAAPVDPSTPAPSTTTTL. The disordered stretch occupies residues 167 to 280; that stretch reads QTISQTAQQA…TPAPSTTTTL (114 aa).

Post-translationally, phosphorylated at Ser-70.

The protein localises to the secreted. Functionally, could be involved in regulation of growth and intracellular survival. The sequence is that of ESX-1 secretion-associated protein EspJ from Mycobacterium tuberculosis (strain CDC 1551 / Oshkosh).